The sequence spans 408 residues: Putative agmatinase 3 (408 aa).

Positions 1–21 (MKSVEWFTWGVFLLLSGFGEA) are cleaved as a signal peptide. Residues His198, Asp222, His224, Asp226, Asp319, and Asp321 each coordinate Mn(2+).

This sequence belongs to the arginase family. Requires Mn(2+) as cofactor.

It carries out the reaction agmatine + H2O = urea + putrescine. The chain is Putative agmatinase 3 from Schizosaccharomyces pombe (strain 972 / ATCC 24843) (Fission yeast).